The chain runs to 194 residues: Ion-translocating oxidoreductase complex subunit A (194 aa).

The next 6 helical transmembrane spans lie at 1–21 (MVMH…FILV), 48–68 (CVIV…LIPF), 73–93 (LCTM…EIIV), 103–123 (LLGI…IPLM), 135–155 (VLYG…FSSI), and 172–192 (PIAL…DGLI).

It belongs to the NqrDE/RnfAE family. The complex is composed of six subunits: RnfA, RnfB, RnfC, RnfD, RnfE and RnfG.

It is found in the cell inner membrane. Its function is as follows. Part of a membrane-bound complex that couples electron transfer with translocation of ions across the membrane. The chain is Ion-translocating oxidoreductase complex subunit A from Buchnera aphidicola subsp. Baizongia pistaciae (strain Bp).